The sequence spans 639 residues: 3-hydroxybenzoate 4-monooxygenase (639 aa).

Residues 34-64 (DVLI…IVEQ), Q73, V166, N212, 269-271 (RFY), Y317, D349, and S365 contribute to the FAD site.

The protein belongs to the PheA/TfdB FAD monooxygenase family. In terms of assembly, homodimer. FAD is required as a cofactor.

The enzyme catalyses 3-hydroxybenzoate + NADPH + O2 + H(+) = 3,4-dihydroxybenzoate + NADP(+) + H2O. Converts 3-hydroxybenzoate (m-hydroxybenzoate), and to a lesser extent p-hydroxybenzoate, to 3,4-dihydroxybenzoate (protocatechuate). Also acts on a number of analogs of 3-hydroxybenzoate substituted in the 2, 4, 5 and 6 positions. The sequence is that of 3-hydroxybenzoate 4-monooxygenase (mobA) from Comamonas testosteroni (Pseudomonas testosteroni).